The primary structure comprises 384 residues: 8-amino-7-oxononanoate synthase (384 aa).

R21 contacts substrate. 108-109 (GF) contacts pyridoxal 5'-phosphate. H133 lines the substrate pocket. The pyridoxal 5'-phosphate site is built by S179, H207, and T233. An N6-(pyridoxal phosphate)lysine modification is found at K236. A substrate-binding site is contributed by T352.

This sequence belongs to the class-II pyridoxal-phosphate-dependent aminotransferase family. BioF subfamily. Homodimer. Pyridoxal 5'-phosphate is required as a cofactor.

The enzyme catalyses 6-carboxyhexanoyl-[ACP] + L-alanine + H(+) = (8S)-8-amino-7-oxononanoate + holo-[ACP] + CO2. It functions in the pathway cofactor biosynthesis; biotin biosynthesis. Functionally, catalyzes the decarboxylative condensation of pimeloyl-[acyl-carrier protein] and L-alanine to produce 8-amino-7-oxononanoate (AON), [acyl-carrier protein], and carbon dioxide. This Shigella sonnei (strain Ss046) protein is 8-amino-7-oxononanoate synthase.